We begin with the raw amino-acid sequence, 293 residues long: TIWLDLNMFLSLGVDCWIDNTRVVYNRSSGRVSNAPGVEIRVPGFGKTYSVEYLDDNKLAEYMHTLVQNLVNNGYVRDETVRAAPYDWRLEPSQQDDYYQKLAGLIEEMYAAYGKPVFLIGHSLGCLHVLYFLLRQGIPIMSSIKLREEQRITTTSPWMFPDRDVWPEDHVFISTPEFNYTGQDFERFFSDLHFEEGWYMWLQSRDLLAGLPAPGVDVYCLYGVGLPTPHTYIYDHNFPYKDPVAALYEDGDDTVATRSTELCGQWQGRQSQPVHLLPMNGTEHLNMVFSNKT.

N-linked (GlcNAc...) asparagine glycosylation occurs at Asn26. Residue Ser123 is the Nucleophile of the active site. Asn179 carries N-linked (GlcNAc...) asparagine glycosylation. A disulfide bond links Cys220 and Cys263. The active-site Charge relay system is the Asp252. N-linked (GlcNAc...) asparagine glycosylation is present at Asn280. Catalysis depends on His284, which acts as the Charge relay system.

Belongs to the AB hydrolase superfamily. Lipase family.

Its subcellular location is the secreted. It carries out the reaction a sterol + a 1,2-diacyl-sn-glycero-3-phosphocholine = a sterol ester + a 1-acyl-sn-glycero-3-phosphocholine. With respect to regulation, APOA1 is the most potent activator in plasma. Also activated by APOE, APOC1 and APOA4. Central enzyme in the extracellular metabolism of plasma lipoproteins. Synthesized mainly in the liver and secreted into plasma where it converts cholesterol and phosphatidylcholines (lecithins) to cholesteryl esters and lysophosphatidylcholines on the surface of high and low density lipoproteins (HDLs and LDLs). The cholesterol ester is then transported back to the liver. Has a preference for plasma 16:0-18:2 or 18:O-18:2 phosphatidylcholines. Also produced in the brain by primary astrocytes, and esterifies free cholesterol on nascent APOE-containing lipoproteins secreted from glia and influences cerebral spinal fluid (CSF) APOE- and APOA1 levels. Together with APOE and the cholesterol transporter ABCA1, plays a key role in the maturation of glial-derived, nascent lipoproteins. Required for remodeling high-density lipoprotein particles into their spherical forms. The polypeptide is Phosphatidylcholine-sterol acyltransferase (LCAT) (Gerbilliscus gambianus (Gambian gerbil)).